Here is a 140-residue protein sequence, read N- to C-terminus: Nucleoside diphosphate kinase (140 aa).

ATP is bound by residues lysine 11, phenylalanine 59, arginine 87, threonine 93, arginine 104, and asparagine 114. Histidine 117 acts as the Pros-phosphohistidine intermediate in catalysis.

The protein belongs to the NDK family. As to quaternary structure, homotetramer. Mg(2+) serves as cofactor.

It localises to the cytoplasm. It catalyses the reaction a 2'-deoxyribonucleoside 5'-diphosphate + ATP = a 2'-deoxyribonucleoside 5'-triphosphate + ADP. It carries out the reaction a ribonucleoside 5'-diphosphate + ATP = a ribonucleoside 5'-triphosphate + ADP. Functionally, major role in the synthesis of nucleoside triphosphates other than ATP. The ATP gamma phosphate is transferred to the NDP beta phosphate via a ping-pong mechanism, using a phosphorylated active-site intermediate. The sequence is that of Nucleoside diphosphate kinase from Sinorhizobium fredii (strain NBRC 101917 / NGR234).